Reading from the N-terminus, the 206-residue chain is Outer-membrane lipoprotein carrier protein (206 aa).

The signal sequence occupies residues 1 to 21; the sequence is MKKLLCAVLLSPLLYSNAVLA.

This sequence belongs to the LolA family. As to quaternary structure, monomer.

The protein localises to the periplasm. Functionally, participates in the translocation of lipoproteins from the inner membrane to the outer membrane. Only forms a complex with a lipoprotein if the residue after the N-terminal Cys is not an aspartate (The Asp acts as a targeting signal to indicate that the lipoprotein should stay in the inner membrane). The protein is Outer-membrane lipoprotein carrier protein of Shewanella sp. (strain ANA-3).